The primary structure comprises 240 residues: PF03932 family protein CutC (240 aa).

This sequence belongs to the CutC family.

Its subcellular location is the cytoplasm. This is PF03932 family protein CutC from Xanthomonas campestris pv. campestris (strain 8004).